The chain runs to 93 residues: Putative regulatory protein Clos_1422 (93 aa).

This sequence belongs to the RemA family.

The chain is Putative regulatory protein Clos_1422 from Alkaliphilus oremlandii (strain OhILAs) (Clostridium oremlandii (strain OhILAs)).